Reading from the N-terminus, the 167-residue chain is Seroin (167 aa).

A signal peptide spans 1 to 17 (MATKILIFLSFVALSSA). Asn-26 carries an N-linked (GlcNAc...) asparagine glycan. 5 repeat units span residues 38–46 (PPLPQPPPL), 56–64 (PPLPQPPPL), 76–78 (PPI), 79–81 (PPI), and 82–84 (PPI). The interval 145–167 (VNETIVGDNPPKFEESRKESSSN) is disordered. N-linked (GlcNAc...) asparagine glycosylation occurs at Asn-146. Over residues 155–167 (PKFEESRKESSSN) the composition is skewed to basic and acidic residues.

As to expression, produced by both the posterior (PSG) and middle (MSG) sections of silk glands.

It localises to the secreted. The chain is Seroin from Galleria mellonella (Greater wax moth).